Reading from the N-terminus, the 1058-residue chain is Ubiquitin-like modifier-activating enzyme 1 (1058 aa).

The segment at 1–46 is disordered; sequence MSSSPLSKKRRVSGPDPKPGSNCSPAQSALSEVSSVPTNGMAKNGS. Serine 2 carries the N-acetylserine modification. A phosphoserine mark is found at serine 4, serine 13, serine 21, serine 24, and serine 46. Residues 21-38 show a composition bias toward polar residues; sequence SNCSPAQSALSEVSSVPT. A Phosphotyrosine modification is found at tyrosine 55. 2 repeat units span residues 63–199 and 459–611. The tract at residues 63–611 is 2 approximate repeats; the sequence is GHEAMKMLQT…GTKGNVQVVI (549 aa). Residues alanine 478, aspartate 504, arginine 515, lysine 528, and 576–577 each bind ATP; that span reads DN. Lysine 528 is subject to N6-succinyllysine. Residue cysteine 632 is the Glycyl thioester intermediate of the active site. Position 671 is an N6-acetyllysine (lysine 671). Threonine 800 carries the phosphothreonine modification. A phosphoserine mark is found at serine 810, serine 816, serine 820, and serine 835. Lysine 980 carries the N6-acetyllysine modification.

It belongs to the ubiquitin-activating E1 family. As to quaternary structure, monomer. Interacts with GAN (via BTB domain). Post-translationally, ISGylated. As to expression, ubiquitously expressed. In testis, expressed in A spermatogonia and spermatids but at very low levels in pachytene spermatocytes.

The protein resides in the cytoplasm. The protein localises to the mitochondrion. Its subcellular location is the nucleus. The enzyme catalyses ATP + ubiquitin + [E1 ubiquitin-activating enzyme]-L-cysteine = AMP + diphosphate + S-ubiquitinyl-[E1 ubiquitin-activating enzyme]-L-cysteine.. It participates in protein modification; protein ubiquitination. Catalyzes the first step in ubiquitin conjugation to mark cellular proteins for degradation through the ubiquitin-proteasome system. Activates ubiquitin by first adenylating its C-terminal glycine residue with ATP, and thereafter linking this residue to the side chain of a cysteine residue in E1, yielding a ubiquitin-E1 thioester and free AMP. Essential for the formation of radiation-induced foci, timely DNA repair and for response to replication stress. Promotes the recruitment of TP53BP1 and BRCA1 at DNA damage sites. The protein is Ubiquitin-like modifier-activating enzyme 1 (Uba1) of Mus musculus (Mouse).